The chain runs to 446 residues: Tubulin beta-6 chain (446 aa).

The MREI motif signature appears at 1-4 (MREI). Positions 11, 69, 138, 142, 143, 144, 204, and 226 each coordinate GTP. Residue Glu69 participates in Mg(2+) binding. The interval 419 to 446 (VSEYQQYQDATADVEEYEEAEASPEKET) is disordered. Acidic residues predominate over residues 430 to 440 (ADVEEYEEAEA).

Belongs to the tubulin family. Dimer of alpha and beta chains. A typical microtubule is a hollow water-filled tube with an outer diameter of 25 nm and an inner diameter of 15 nM. Alpha-beta heterodimers associate head-to-tail to form protofilaments running lengthwise along the microtubule wall with the beta-tubulin subunit facing the microtubule plus end conferring a structural polarity. Microtubules usually have 13 protofilaments but different protofilament numbers can be found in some organisms and specialized cells. Requires Mg(2+) as cofactor. In terms of processing, some glutamate residues at the C-terminus are polyglycylated, resulting in polyglycine chains on the gamma-carboxyl group. Glycylation is mainly limited to tubulin incorporated into axonemes (cilia and flagella) whereas glutamylation is prevalent in neuronal cells, centrioles, axonemes, and the mitotic spindle. Both modifications can coexist on the same protein on adjacent residues, and lowering polyglycylation levels increases polyglutamylation, and reciprocally. The precise function of polyglycylation is still unclear. Post-translationally, some glutamate residues at the C-terminus are polyglutamylated, resulting in polyglutamate chains on the gamma-carboxyl group. Polyglutamylation plays a key role in microtubule severing by spastin (SPAST). SPAST preferentially recognizes and acts on microtubules decorated with short polyglutamate tails: severing activity by SPAST increases as the number of glutamates per tubulin rises from one to eight, but decreases beyond this glutamylation threshold. As to expression, highly expressed in bone marrow.

Its subcellular location is the cytoplasm. The protein resides in the cytoskeleton. Tubulin is the major constituent of microtubules, a cylinder consisting of laterally associated linear protofilaments composed of alpha- and beta-tubulin heterodimers. Microtubules grow by the addition of GTP-tubulin dimers to the microtubule end, where a stabilizing cap forms. Below the cap, tubulin dimers are in GDP-bound state, owing to GTPase activity of alpha-tubulin. This is Tubulin beta-6 chain from Gallus gallus (Chicken).